The chain runs to 227 residues: PKHD-type hydroxylase CC_0027 (227 aa).

The region spanning 78-178 (TILSPMFNRY…RTASFFWIQS (101 aa)) is the Fe2OG dioxygenase domain. Fe cation is bound by residues H96, D98, and H159. R169 contributes to the 2-oxoglutarate binding site.

Fe(2+) is required as a cofactor. Requires L-ascorbate as cofactor.

This Caulobacter vibrioides (strain ATCC 19089 / CIP 103742 / CB 15) (Caulobacter crescentus) protein is PKHD-type hydroxylase CC_0027.